Reading from the N-terminus, the 664-residue chain is Macoilin (664 aa).

The next 4 helical transmembrane spans lie at 28-48 (TFLYLKFLVVWALVLLADFVL), 75-95 (AFSVFFVCVAFTSNIICLLFI), 120-140 (VCLPTVSLWILFVYIEAAIRF), and 154-174 (FAAHCIGYPVVTLGFGFKSYV). A compositionally biased stretch (basic and acidic residues) spans 253–265 (REKGKEKDKDAKK). Positions 253-274 (REKGKEKDKDAKKHNLGINNNN) are disordered. At S305 the chain carries Phosphoserine. The span at 320-348 (KNYKNASGVVNSSPRSHSATNGSIPSSSS) shows a compositional bias: polar residues. Residues 320–367 (KNYKNASGVVNSSPRSHSATNGSIPSSSSKNEKKQKCTSKSPSAHKDL) are disordered. N324 carries N-linked (GlcNAc...) asparagine glycosylation. Residue S332 is modified to Phosphoserine. N-linked (GlcNAc...) asparagine glycosylation is found at N340 and N452. The tract at residues 630-664 (TSPLSPVSPHYSSKFVETSPSGLDPNASVYQPLKK) is disordered. A phosphoserine mark is found at S631 and S634. N655 is a glycosylation site (N-linked (GlcNAc...) asparagine).

It belongs to the macoilin family.

The protein localises to the rough endoplasmic reticulum membrane. It is found in the nucleus membrane. Plays a role in the regulation of neuronal activity. The protein is Macoilin (MACO1) of Sus scrofa (Pig).